A 431-amino-acid polypeptide reads, in one-letter code: Beta-lactamase hydrolase-like protein (431 aa).

Histidine 212, histidine 214, and histidine 286 together coordinate Zn(2+). Substrate is bound at residue aspartate 309.

It belongs to the metallo-beta-lactamase superfamily. The cofactor is Zn(2+).

Its function is as follows. Could play a role in cell adherence or biofilm development. The chain is Beta-lactamase hydrolase-like protein from Xylella fastidiosa (strain 9a5c).